Here is a 118-residue protein sequence, read N- to C-terminus: MARVKRGVVARRRHKKILKLAKGYYGARSRVFRVAKQAVIKAGQYAYRDRRQRKRQFRALWIARINAGARVNGLSYSRLIAGLKKAAIEIDRKVLADLAVNEKAAFAAIVEKAKASLA.

It belongs to the bacterial ribosomal protein bL20 family.

Binds directly to 23S ribosomal RNA and is necessary for the in vitro assembly process of the 50S ribosomal subunit. It is not involved in the protein synthesizing functions of that subunit. This Stutzerimonas stutzeri (strain A1501) (Pseudomonas stutzeri) protein is Large ribosomal subunit protein bL20.